Reading from the N-terminus, the 133-residue chain is Ribosome-binding factor A (133 aa).

This sequence belongs to the RbfA family. Monomer. Binds 30S ribosomal subunits, but not 50S ribosomal subunits or 70S ribosomes.

Its subcellular location is the cytoplasm. Its function is as follows. One of several proteins that assist in the late maturation steps of the functional core of the 30S ribosomal subunit. Associates with free 30S ribosomal subunits (but not with 30S subunits that are part of 70S ribosomes or polysomes). Required for efficient processing of 16S rRNA. May interact with the 5'-terminal helix region of 16S rRNA. This Cronobacter sakazakii (strain ATCC BAA-894) (Enterobacter sakazakii) protein is Ribosome-binding factor A.